Consider the following 529-residue polypeptide: Peptide chain release factor 3 (529 aa).

The tr-type G domain occupies 10–278 (ARRRTFAIIS…MFVEFAPGPQ (269 aa)). GTP is bound by residues 19-26 (SHPDAGKT), 87-91 (DTPGH), and 141-144 (NKMD).

Belongs to the TRAFAC class translation factor GTPase superfamily. Classic translation factor GTPase family. PrfC subfamily.

The protein localises to the cytoplasm. Functionally, increases the formation of ribosomal termination complexes and stimulates activities of RF-1 and RF-2. It binds guanine nucleotides and has strong preference for UGA stop codons. It may interact directly with the ribosome. The stimulation of RF-1 and RF-2 is significantly reduced by GTP and GDP, but not by GMP. The protein is Peptide chain release factor 3 of Nitratidesulfovibrio vulgaris (strain DSM 19637 / Miyazaki F) (Desulfovibrio vulgaris).